The following is a 432-amino-acid chain: Ornithine decarboxylase, chloroplastic (432 aa).

Lys-95 is modified (N6-(pyridoxal phosphate)lysine). Pyridoxal 5'-phosphate-binding positions include Ser-227, Gly-265, and 298–301; that span reads EPGR. Residue 341–342 participates in substrate binding; it reads YD. The active-site Proton donor; shared with dimeric partner is the Cys-377. Substrate is bound at residue Asp-378. Residue Tyr-406 coordinates pyridoxal 5'-phosphate.

The protein belongs to the Orn/Lys/Arg decarboxylase class-II family. Homodimer. Only the dimer is catalytically active, as the active sites are constructed of residues from both monomers. Requires pyridoxal 5'-phosphate as cofactor.

The protein localises to the plastid. Its subcellular location is the chloroplast. It catalyses the reaction L-lysine + H(+) = cadaverine + CO2. The enzyme catalyses L-ornithine + H(+) = putrescine + CO2. The protein operates within alkaloid biosynthesis; nicotine biosynthesis. Its pathway is amine and polyamine biosynthesis; putrescine biosynthesis via L-ornithine pathway; putrescine from L-ornithine: step 1/1. Its activity is regulated as follows. Repressed by alpha-difluoromethylornithine (DFMO), 5,5'-dithiobis-(2-nitrobenzoic acid) (DTNB) and salicylaldehyde. Involved in the biosynthesis of pyridine alkaloid natural products, leading mainly to the production of anabasine, anatabine, nicotine and nornicotine, effective deterrents against herbivores with antiparasitic and pesticide properties (neurotoxins); nornicotine serves as the precursor in the synthesis of the carcinogen compound N'-nitrosonornicotine (NNN). Catalyzes the first and rate-limiting step of polyamine biosynthesis that converts ornithine into putrescine, which is the precursor for the polyamines, spermidine and spermine. Can also use, with a lower efficiency, L-lysine as substrate to produce cadaverine. Polyamines are essential for cell proliferation and are implicated in cellular processes, ranging from DNA replication to apoptosis. This Nicotiana glutinosa (Tobacco) protein is Ornithine decarboxylase, chloroplastic.